The sequence spans 517 residues: 2,3-bisphosphoglycerate-independent phosphoglycerate mutase (517 aa).

Mn(2+)-binding residues include Asp12 and Ser62. Ser62 acts as the Phosphoserine intermediate in catalysis. Substrate contacts are provided by residues His123, 153–154 (RD), Arg185, Arg191, 261–264 (RSDR), and Lys336. Mn(2+) is bound by residues Asp403, His407, Asp444, His445, and His463.

This sequence belongs to the BPG-independent phosphoglycerate mutase family. In terms of assembly, monomer. Mn(2+) serves as cofactor.

It catalyses the reaction (2R)-2-phosphoglycerate = (2R)-3-phosphoglycerate. It participates in carbohydrate degradation; glycolysis; pyruvate from D-glyceraldehyde 3-phosphate: step 3/5. Its function is as follows. Catalyzes the interconversion of 2-phosphoglycerate and 3-phosphoglycerate. This Methylobacillus flagellatus (strain ATCC 51484 / DSM 6875 / VKM B-1610 / KT) protein is 2,3-bisphosphoglycerate-independent phosphoglycerate mutase.